A 185-amino-acid polypeptide reads, in one-letter code: dCTP deaminase (185 aa).

DCTP is bound by residues 108–113 (KSTYAR), 132–134 (TLE), Gln153, Tyr167, and Gln177. Glu134 (proton donor/acceptor) is an active-site residue.

It belongs to the dCTP deaminase family. As to quaternary structure, homotrimer.

The catalysed reaction is dCTP + H2O + H(+) = dUTP + NH4(+). It participates in pyrimidine metabolism; dUMP biosynthesis; dUMP from dCTP (dUTP route): step 1/2. In terms of biological role, catalyzes the deamination of dCTP to dUTP. This is dCTP deaminase from Pelagibacter ubique (strain HTCC1062).